Reading from the N-terminus, the 356-residue chain is Uroporphyrinogen decarboxylase (356 aa).

Residues 23-27 (RQAGR), aspartate 72, tyrosine 148, serine 203, and histidine 321 contribute to the substrate site.

It belongs to the uroporphyrinogen decarboxylase family. As to quaternary structure, homodimer.

The protein resides in the cytoplasm. The catalysed reaction is uroporphyrinogen III + 4 H(+) = coproporphyrinogen III + 4 CO2. Its pathway is porphyrin-containing compound metabolism; protoporphyrin-IX biosynthesis; coproporphyrinogen-III from 5-aminolevulinate: step 4/4. Its function is as follows. Catalyzes the decarboxylation of four acetate groups of uroporphyrinogen-III to yield coproporphyrinogen-III. The protein is Uroporphyrinogen decarboxylase of Chloroflexus aggregans (strain MD-66 / DSM 9485).